We begin with the raw amino-acid sequence, 1133 residues long: Early transcription factor large subunit homolog (1133 aa).

The Helicase ATP-binding domain maps to 52–352 (KGGRAFFPCD…PNGQPLQRQQ (301 aa)). 99 to 106 (WQTGTGKS) is a binding site for ATP. Residues 281 to 284 (DEIH) carry the DEAH box motif. One can recognise a Helicase C-terminal domain in the interval 524 to 724 (MMKDILSIIR…EGDKALRKHA (201 aa)).

The protein belongs to the DEAD box helicase family. DEAH subfamily.

It is found in the virion. It carries out the reaction ATP + H2O = ADP + phosphate + H(+). In terms of biological role, putative initation factor. The protein is Early transcription factor large subunit homolog of Ornithodoros (relapsing fever ticks).